The chain runs to 629 residues: MIFHENFDVIVVGGGHAGTEAALAAARMGMNTLLLTHNMDTLGQMSCNPAIGGIGKGHLVKEIDALGGAMAQAIDKGGIQFRTLNSSKGPAVRATRAQADRALYKAAIQTTLQNQDNLKIFQQSCDDLIVENDRVTGVVTQMGLRFSAPSVVLTVGTFLGGQIHIGLENFKGGRAGDPPSIALADRLRELPFRVDRLKTGTPPRIDARTVDFSKMQEQAGDTPIPVFSFMGKPSDHPQQIPCYITFTNEKTHDVIRKNLHRSPMYGGVIEGIGPRYCPSIEDKIVRFADKDKHQIFVEPEGLTSYELYPNGISTSLPFDVQIEIVQSITGFENAHICRPGYAIEYDFFDPRDLKRSLETKFIDGLFFAGQINGTTGYEEAGAQGLIAGMNAALKVQGKESWTPRRDEAYVGVLIDDLTTLGTKEPYRMFTSRAEYRLLLREDNADIRLTEKGRELGLVNDERWQAYNEKMEVIAKEKQRIKDTWIHKDHTMIDQVNALLKTPLTREASLEELLRRPEIRYNDLMAIDGLGSEFTNQAALEQVEIHTKYAGYIVRQQDEINKQLRHEQTILPKEFDYKTVSGLSNEVVAKLIDARPDTIGQASRISGITPAAISLLLVYLKKQGLLRKSA.

13-18 provides a ligand contact to FAD; that stretch reads GGGHAG. An NAD(+)-binding site is contributed by 273 to 287; it reads GPRYCPSIEDKIVRF.

The protein belongs to the MnmG family. In terms of assembly, homodimer. Heterotetramer of two MnmE and two MnmG subunits. The cofactor is FAD.

It is found in the cytoplasm. NAD-binding protein involved in the addition of a carboxymethylaminomethyl (cmnm) group at the wobble position (U34) of certain tRNAs, forming tRNA-cmnm(5)s(2)U34. This Pseudoalteromonas translucida (strain TAC 125) protein is tRNA uridine 5-carboxymethylaminomethyl modification enzyme MnmG.